A 311-amino-acid chain; its full sequence is Elongation factor Ts (311 aa).

Residues 81-84 (TDFV) are involved in Mg(2+) ion dislocation from EF-Tu.

It belongs to the EF-Ts family.

It is found in the cytoplasm. Functionally, associates with the EF-Tu.GDP complex and induces the exchange of GDP to GTP. It remains bound to the aminoacyl-tRNA.EF-Tu.GTP complex up to the GTP hydrolysis stage on the ribosome. The chain is Elongation factor Ts from Trichlorobacter lovleyi (strain ATCC BAA-1151 / DSM 17278 / SZ) (Geobacter lovleyi).